The sequence spans 546 residues: Intermembrane transport protein PqiB (546 aa).

At 1 to 15 the chain is on the cytoplasmic side; sequence MESNNGEAKIQKVKN. A helical transmembrane segment spans residues 16-36; the sequence is WSPVWIFPIVTALIGAWVLFY. The Periplasmic portion of the chain corresponds to 37 to 546; that stretch reads HYSHQGPEVT…KDPEPKRAKQ (510 aa). MCE/MlaD regions lie at residues 42–133, 158–217, and 285–389; these read GPEV…LQPG, IRVI…NNVR, and HIDY…LDFY. Positions 437–464 form a coiled coil; it reads IEQATSTLSESQRTMKNLQTTLDSMNKI.

This sequence belongs to the PqiB family. As to quaternary structure, homohexamer. May form a complex composed of PqiA, PqiB and PqiC. Interacts with PqiC.

It is found in the cell inner membrane. In terms of biological role, forms a tunnel that spans the entire periplasmic space. Could be implicated in lipid transport between the inner membrane and the outer membrane. Binds phospholipids. Required for outer membrane homeostasis. Contributes to membrane integrity. In Escherichia coli (strain K12), this protein is Intermembrane transport protein PqiB.